The sequence spans 225 residues: Putative adhesin RT0816 (225 aa).

The N-terminal stretch at 1–22 (MKKLLLIAATSATILSSSISFA) is a signal peptide.

The protein is Putative adhesin RT0816 of Rickettsia typhi (strain ATCC VR-144 / Wilmington).